The following is a 153-amino-acid chain: Acylphosphatase-like protein MJ0553 (153 aa).

The Acylphosphatase-like domain maps to 4 to 102 (TYELIIYGRV…SRLSSDDILE (99 aa)).

This chain is Acylphosphatase-like protein MJ0553, found in Methanocaldococcus jannaschii (strain ATCC 43067 / DSM 2661 / JAL-1 / JCM 10045 / NBRC 100440) (Methanococcus jannaschii).